The primary structure comprises 728 residues: Polyphosphate kinase (728 aa).

Asn-57 lines the ATP pocket. Mg(2+) is bound by residues Arg-408 and Arg-438. His-468 serves as the catalytic Phosphohistidine intermediate. Residues Tyr-501, Arg-597, and His-625 each contribute to the ATP site. Positions 694 to 728 (VQRRPASPEQSQSSQAIFTAQAIAETTEDPELRSV) are disordered. The segment covering 695 to 709 (QRRPASPEQSQSSQA) has biased composition (low complexity).

It belongs to the polyphosphate kinase 1 (PPK1) family. It depends on Mg(2+) as a cofactor. Post-translationally, an intermediate of this reaction is the autophosphorylated ppk in which a phosphate is covalently linked to a histidine residue through a N-P bond.

The enzyme catalyses [phosphate](n) + ATP = [phosphate](n+1) + ADP. In terms of biological role, catalyzes the reversible transfer of the terminal phosphate of ATP to form a long-chain polyphosphate (polyP). The polypeptide is Polyphosphate kinase (Synechocystis sp. (strain ATCC 27184 / PCC 6803 / Kazusa)).